A 513-amino-acid chain; its full sequence is Lysine--tRNA ligase (513 aa).

2 residues coordinate Mg(2+): glutamate 422 and glutamate 429.

Belongs to the class-II aminoacyl-tRNA synthetase family. Homodimer. Mg(2+) is required as a cofactor.

The protein localises to the cytoplasm. It carries out the reaction tRNA(Lys) + L-lysine + ATP = L-lysyl-tRNA(Lys) + AMP + diphosphate. In Tolumonas auensis (strain DSM 9187 / NBRC 110442 / TA 4), this protein is Lysine--tRNA ligase.